The following is a 175-amino-acid chain: Large ribosomal subunit protein uL22y (175 aa).

The segment covering 153 to 163 has biased composition (basic and acidic residues); sequence EKEEPVKKEPE. The interval 153–175 is disordered; that stretch reads EKEEPVKKEPETQLAAKSKKSAA.

It belongs to the universal ribosomal protein uL22 family.

The polypeptide is Large ribosomal subunit protein uL22y (RPL17B) (Arabidopsis thaliana (Mouse-ear cress)).